Here is a 135-residue protein sequence, read N- to C-terminus: Ribonuclease P protein component 2 (135 aa).

It belongs to the eukaryotic/archaeal RNase P protein component 2 family. As to quaternary structure, consists of a catalytic RNA component and at least 4-5 protein subunits.

It localises to the cytoplasm. The catalysed reaction is Endonucleolytic cleavage of RNA, removing 5'-extranucleotides from tRNA precursor.. Its function is as follows. Part of ribonuclease P, a protein complex that generates mature tRNA molecules by cleaving their 5'-ends. The chain is Ribonuclease P protein component 2 from Methanococcus aeolicus (strain ATCC BAA-1280 / DSM 17508 / OCM 812 / Nankai-3).